A 492-amino-acid chain; its full sequence is Falcipain-3 (492 aa).

The Cytoplasmic portion of the chain corresponds to 1–35; the sequence is MEYHMEYSPNEVIKQEREVFVGKEKSGSKFKRKRS. A propeptide spans 1–242 (activation peptide); sequence MEYHMEYSPN…LNLKTHGPFK (242 aa). The Bipartite vacuolar targeting signal 1 signature appears at 16 to 25; that stretch reads EREVFVGKEK. The chain crosses the membrane as a helical; Signal-anchor for type II membrane protein span at residues 36–56; sequence IFIVLTVSICFMFALMLFYFT. The Lumenal portion of the chain corresponds to 57–492; that stretch reads RNENNKTLFT…GTEAYVPLLE (436 aa). Asn61 carries an N-linked (GlcNAc...) asparagine glycan. The Bipartite vacuolar targeting signal 2 motif lies at 84–105; the sequence is KSESGKKFIVSKLEELISSYDK. Residue Asn129 is glycosylated (N-linked (GlcNAc...) asparagine). The short motif at 251–268 is the Nose motif; required for the correct folding of the mature form element; the sequence is EANYEDVIKKYKPADAKL. 4 disulfide bridges follow: Cys290–Cys331, Cys324–Cys365, Cys350–Cys370, and Cys419–Cys480. The active site involves Cys293. His425 is a catalytic residue. The Arm motif; binds to host hemoglobin and required for the inhibitory interaction between the propeptide and the catalytic domain signature appears at 436-445; the sequence is DIYNEDTGRM. The active site involves Asn455.

Belongs to the peptidase C1 family. Auto-cleavage occurs at acidic pH. The proenzyme is the predominant form in late trophozoites and both the pro and mature enzyme are present in schizonts.

It is found in the membrane. It localises to the vacuole. Its subcellular location is the cytoplasmic vesicle membrane. Inhibited by cysteine protease inhibitor ICP. Cysteine protease which cleaves native host hemoglobin and globin in the food vacuole during the asexual blood stage. Preferentially cleaves substrates which have an arginine at the P1 position and a leucine at the P2 position. This chain is Falcipain-3, found in Plasmodium falciparum (isolate 3D7).